Here is a 421-residue protein sequence, read N- to C-terminus: Histidine--tRNA ligase (421 aa).

It belongs to the class-II aminoacyl-tRNA synthetase family. Homodimer.

It localises to the cytoplasm. It carries out the reaction tRNA(His) + L-histidine + ATP = L-histidyl-tRNA(His) + AMP + diphosphate + H(+). The chain is Histidine--tRNA ligase from Francisella tularensis subsp. novicida (strain U112).